The sequence spans 127 residues: Calcitonin receptor-stimulating peptide 2 (127 aa).

A signal peptide spans 1–25; that stretch reads MGFWKLSPFLAIGLLVMYQAGILQA. The propeptide occupies 26–81; sequence APFRSALENPLESATLTEDEICVLLTAVVKDYVQMKARELQQEQETEGSSLTAQKS. Positions 65 to 85 are disordered; that stretch reads LQQEQETEGSSLTAQKSSCKD. The segment covering 72–81 has biased composition (polar residues); that stretch reads EGSSLTAQKS. The cysteines at positions 83 and 88 are disulfide-linked.

Belongs to the calcitonin family.

The protein localises to the secreted. The protein is Calcitonin receptor-stimulating peptide 2 (CRSP2) of Canis lupus familiaris (Dog).